A 446-amino-acid polypeptide reads, in one-letter code: Immunoglobulin heavy constant gamma 3 (446 aa).

Residues 1 to 98 (ASTKGPSVFP…PSNTKVDKRV (98 aa)) are CH1. The Extracellular segment spans residues 1 to 397 (ASTKGPSVFP…DGELDGLWTT (397 aa)). An Ig-like 1 domain is found at 6 to 99 (PSVFPLAPCS…SNTKVDKRVE (94 aa)). Residues C27 and C83 are joined by a disulfide bond. Residues 99 to 160 (ELKTPLGDTT…DTPPPCPRCP (62 aa)) form a hinge region. Repeats lie at residues 116 to 130 (EPKS…PRCP), 131 to 145 (EPKS…PRCP), and 146 to 160 (EPKS…PRCP). 3 O-linked (GalNAc...) threonine glycosylation sites follow: T122, T137, and T152. The interval 161 to 270 (APELLGGPSV…PIEKTISKTK (110 aa)) is CH2. 2 Ig-like domains span residues 168–267 (PSVF…KTIS) and 276–372 (PQVY…KSLS). Cystine bridges form between C191–C251 and C297–C355. 2 N-linked (GlcNAc...) asparagine glycosylation sites follow: N227 and N322. The CH3 stretch occupies residues 271 to 376 (GQPREPQVYT…TQKSLSLSPE (106 aa)). A helical transmembrane segment spans residues 398-418 (ITIFITLFLLSVCYSATVTFF). The Cytoplasmic segment spans residues 419–446 (KVKWIFSSVVDLKQTIIPDYRNMIGQGA).

Immunoglobulins are composed of two identical heavy chains and two identical light chains; disulfide-linked. Post-translationally, N-linked glycans at Asn-322 are noncore fucosylated and the vast majority are diantennary species with a bisecting GlcNAc. Among them the most dominant glycans are HexNAc5Hex4, HexNAc5Hex5, and HexNAc5Hex5Sia1. In terms of processing, N-linked glycans at Asn-227 are diantennary core fucosylated structures without bisecting GlcNAc (HexNAc4Hex4Fuc1, HexNAc4Hex5Fuc1, and HexNAc4Hex5Fuc1Sia1). Glycosylation on Asn-227 is required for interaction with Fc receptors and ability to activate the complement pathway. (Microbial infection) Deglycosylation on Asn-227 by S.pyogenes EndoS or Endos2 endoglucosidases prevents interaction between immunoglobulin-gamma (IgG) and Fc receptors, impairing ability to activate the complement pathway. Post-translationally, O-linked glycans are non-, mono- and disialylated core 1-type O-glycans.

It is found in the secreted. Its subcellular location is the cell membrane. Constant region of immunoglobulin heavy chains. Immunoglobulins, also known as antibodies, are membrane-bound or secreted glycoproteins produced by B lymphocytes. In the recognition phase of humoral immunity, the membrane-bound immunoglobulins serve as receptors which, upon binding of a specific antigen, trigger the clonal expansion and differentiation of B lymphocytes into immunoglobulins-secreting plasma cells. Secreted immunoglobulins mediate the effector phase of humoral immunity, which results in the elimination of bound antigens. The antigen binding site is formed by the variable domain of one heavy chain, together with that of its associated light chain. Thus, each immunoglobulin has two antigen binding sites with remarkable affinity for a particular antigen. The variable domains are assembled by a process called V-(D)-J rearrangement and can then be subjected to somatic hypermutations which, after exposure to antigen and selection, allow affinity maturation for a particular antigen. In Homo sapiens (Human), this protein is Immunoglobulin heavy constant gamma 3.